The sequence spans 159 residues: Transmembrane protein 42 (159 aa).

The next 4 membrane-spanning stretches (helical) occupy residues 37-57, 59-79, 100-120, and 124-144; these read FWGV…AASA, LAFG…VMAS, IASV…GYVL, and CQEV…TLIH.

The protein localises to the membrane. The protein is Transmembrane protein 42 (TMEM42) of Pongo abelii (Sumatran orangutan).